A 403-amino-acid chain; its full sequence is Ribosomal RNA large subunit methyltransferase I (403 aa).

Residues 9 to 86 (YPRLVLSKGR…KAESIDIAFF (78 aa)) enclose the PUA domain.

This sequence belongs to the methyltransferase superfamily. RlmI family.

It localises to the cytoplasm. It carries out the reaction cytidine(1962) in 23S rRNA + S-adenosyl-L-methionine = 5-methylcytidine(1962) in 23S rRNA + S-adenosyl-L-homocysteine + H(+). Specifically methylates the cytosine at position 1962 (m5C1962) of 23S rRNA. The polypeptide is Ribosomal RNA large subunit methyltransferase I (Salmonella gallinarum (strain 287/91 / NCTC 13346)).